A 66-amino-acid polypeptide reads, in one-letter code: Large ribosomal subunit protein uL29 (66 aa).

This sequence belongs to the universal ribosomal protein uL29 family.

This Allorhizobium ampelinum (strain ATCC BAA-846 / DSM 112012 / S4) (Agrobacterium vitis (strain S4)) protein is Large ribosomal subunit protein uL29.